Here is a 358-residue protein sequence, read N- to C-terminus: MSSPLEKPQIIAHVQKPVTYTLFDCKWIPCSAKFVCVGNLARGSGVLQVYEIQQGEAKLLQEAEKPKPIKCGTFGASSLQQRYLATGDFGGNLNIWNLEAPDTPVYSAKGHNEIINCIDGVGGVGIGEGAPEIVTGSRDGTVKVWDPRQKDTPVANMEPAAGETKRDCWTVAFGHAYNEQERLVCAGYDNGDIKLFDLRNMSVRWETNIKNGVCSLEFDRKDIVMNKLVATSLEGKFHVFDMRTQHPSKGFASMSEKAHKSTIWQVRHLPQNRDVFMTSGGAGNLHLWKYEYPAQRSRKDSDDVDMGVAGSVSLLQNVTLSTQPISSMDWSPDKKGLCVCTSFDQTVRVLIVTKLNKL.

6 WD repeats span residues 64–106 (EKPK…TPVY), 116–155 (NCIDGVGGVGIGEGAPEIVTGSRDGTVKVWDPRQKDTPVA), 163–206 (ETKR…VRWE), 208–250 (NIKN…PSKG), 258–298 (AHKS…QRSR), and 320–358 (LSTQPISSMDWSPDKKGLCVCTSFDQTVRVLIVTKLNKL).

Interacts with PIH1D1; the interaction associates DNAAF10 with the R2TP complex. Interacts with several dynein axonemal assembly factors.

It localises to the dynein axonemal particle. Its function is as follows. Key assembly factor specifically required for the stability of axonemal dynein heavy chains in cytoplasm. This chain is Dynein axonemal assembly factor 10 (dnaaf10), found in Xenopus tropicalis (Western clawed frog).